We begin with the raw amino-acid sequence, 111 residues long: Cell division topological specificity factor (111 aa).

The protein belongs to the MinE family.

Functionally, prevents the cell division inhibition by proteins MinC and MinD at internal division sites while permitting inhibition at polar sites. This ensures cell division at the proper site by restricting the formation of a division septum at the midpoint of the long axis of the cell. The protein is Cell division topological specificity factor of Prochlorococcus marinus (strain MIT 9312).